The primary structure comprises 443 residues: Threonine/serine transporter TdcC (443 aa).

Helical transmembrane passes span 22 to 42, 44 to 64, 97 to 117, 140 to 160, 163 to 183, 207 to 227, 259 to 279, 319 to 339, 366 to 386, 389 to 409, and 423 to 443; these read TTWT…FFPI, AGFG…PIAF, GVVI…IYGV, FVAL…KDLM, VMSY…LSLI, ILVT…FSPI, ASML…FTLS, ASII…LGTL, ISMI…PNIL, IEAM…MYAI, and DNVF…YKLF.

The protein belongs to the amino acid/polyamine transporter 2 family. SdaC/TdcC subfamily.

It is found in the cell inner membrane. The catalysed reaction is L-threonine(in) + H(+)(in) = L-threonine(out) + H(+)(out). It catalyses the reaction L-serine(in) + H(+)(in) = L-serine(out) + H(+)(out). Involved in the import of threonine and serine into the cell, with the concomitant import of a proton (symport system). The polypeptide is Threonine/serine transporter TdcC (Salmonella newport (strain SL254)).